The following is a 355-amino-acid chain: Protein RecA (355 aa).

ATP is bound at residue Gly-65–Thr-72. Residues Ile-333–Glu-355 form a disordered region. Over residues Lys-336–Glu-347 the composition is skewed to basic and acidic residues.

Belongs to the RecA family.

It localises to the cytoplasm. Functionally, can catalyze the hydrolysis of ATP in the presence of single-stranded DNA, the ATP-dependent uptake of single-stranded DNA by duplex DNA, and the ATP-dependent hybridization of homologous single-stranded DNAs. It interacts with LexA causing its activation and leading to its autocatalytic cleavage. This chain is Protein RecA, found in Staphylococcus carnosus (strain TM300).